We begin with the raw amino-acid sequence, 223 residues long: UPF0441 protein YgiB (223 aa).

The span at 178-195 (TVPKTAMAPKPATTTTVT) shows a compositional bias: low complexity. The tract at residues 178–223 (TVPKTAMAPKPATTTTVTRGGFGESIAKQSTMQRSATGTSSRSMGG) is disordered. Over residues 204-223 (AKQSTMQRSATGTSSRSMGG) the composition is skewed to polar residues.

Belongs to the UPF0441 family.

The protein is UPF0441 protein YgiB of Shigella boydii serotype 4 (strain Sb227).